Reading from the N-terminus, the 338-residue chain is Ketol-acid reductoisomerase (NADP(+)) (338 aa).

In terms of domain architecture, KARI N-terminal Rossmann spans 1-181; sequence MKVFYDKDAD…GGGRAGIIET (181 aa). NADP(+) contacts are provided by residues 24-27, arginine 47, and serine 52; that span reads YGSQ. Histidine 107 is a catalytic residue. Glycine 133 contributes to the NADP(+) binding site. One can recognise a KARI C-terminal knotted domain in the interval 182 to 327; sequence NFREETETDL…SKLRAMMPWI (146 aa). Residues aspartate 190, glutamate 194, glutamate 226, and glutamate 230 each coordinate Mg(2+). Serine 251 is a substrate binding site.

It belongs to the ketol-acid reductoisomerase family. Mg(2+) is required as a cofactor.

The enzyme catalyses (2R)-2,3-dihydroxy-3-methylbutanoate + NADP(+) = (2S)-2-acetolactate + NADPH + H(+). The catalysed reaction is (2R,3R)-2,3-dihydroxy-3-methylpentanoate + NADP(+) = (S)-2-ethyl-2-hydroxy-3-oxobutanoate + NADPH + H(+). It functions in the pathway amino-acid biosynthesis; L-isoleucine biosynthesis; L-isoleucine from 2-oxobutanoate: step 2/4. It participates in amino-acid biosynthesis; L-valine biosynthesis; L-valine from pyruvate: step 2/4. Its function is as follows. Involved in the biosynthesis of branched-chain amino acids (BCAA). Catalyzes an alkyl-migration followed by a ketol-acid reduction of (S)-2-acetolactate (S2AL) to yield (R)-2,3-dihydroxy-isovalerate. In the isomerase reaction, S2AL is rearranged via a Mg-dependent methyl migration to produce 3-hydroxy-3-methyl-2-ketobutyrate (HMKB). In the reductase reaction, this 2-ketoacid undergoes a metal-dependent reduction by NADPH to yield (R)-2,3-dihydroxy-isovalerate. The polypeptide is Ketol-acid reductoisomerase (NADP(+)) (Burkholderia mallei (strain NCTC 10229)).